A 61-amino-acid polypeptide reads, in one-letter code: MARKALIEKAKRTPKFKVRAYTRCVRCGRARSVYRYFGLCRICLRELAHKGQLPGVKKASW.

4 residues coordinate Zn(2+): cysteine 24, cysteine 27, cysteine 40, and cysteine 43.

The protein belongs to the universal ribosomal protein uS14 family. Zinc-binding uS14 subfamily. As to quaternary structure, part of the 30S ribosomal subunit. Contacts proteins S3 and S10. The cofactor is Zn(2+).

In terms of biological role, binds 16S rRNA, required for the assembly of 30S particles and may also be responsible for determining the conformation of the 16S rRNA at the A site. The protein is Small ribosomal subunit protein uS14 of Thermus aquaticus.